We begin with the raw amino-acid sequence, 126 residues long: Ribosome-binding factor A (126 aa).

It belongs to the RbfA family. In terms of assembly, monomer. Binds 30S ribosomal subunits, but not 50S ribosomal subunits or 70S ribosomes.

It localises to the cytoplasm. In terms of biological role, one of several proteins that assist in the late maturation steps of the functional core of the 30S ribosomal subunit. Associates with free 30S ribosomal subunits (but not with 30S subunits that are part of 70S ribosomes or polysomes). Required for efficient processing of 16S rRNA. May interact with the 5'-terminal helix region of 16S rRNA. This chain is Ribosome-binding factor A, found in Thermosipho africanus (strain TCF52B).